Here is a 266-residue protein sequence, read N- to C-terminus: Tryptophan synthase alpha chain (266 aa).

Residues Glu-49 and Asp-60 each act as proton acceptor in the active site.

It belongs to the TrpA family. In terms of assembly, tetramer of two alpha and two beta chains.

The enzyme catalyses (1S,2R)-1-C-(indol-3-yl)glycerol 3-phosphate + L-serine = D-glyceraldehyde 3-phosphate + L-tryptophan + H2O. The protein operates within amino-acid biosynthesis; L-tryptophan biosynthesis; L-tryptophan from chorismate: step 5/5. In terms of biological role, the alpha subunit is responsible for the aldol cleavage of indoleglycerol phosphate to indole and glyceraldehyde 3-phosphate. This is Tryptophan synthase alpha chain from Trichormus variabilis (strain ATCC 29413 / PCC 7937) (Anabaena variabilis).